A 375-amino-acid polypeptide reads, in one-letter code: Carbamoyl phosphate synthase small chain (375 aa).

The interval 1–186 (MKAILALEDG…IVDGTYAWPG (186 aa)) is CPSase. S45, G238, and G240 together coordinate L-glutamine. A Glutamine amidotransferase type-1 domain is found at 190-375 (RLVVFDMGIK…RNLVRKETGK (186 aa)). Residue C265 is the Nucleophile of the active site. The L-glutamine site is built by L266, Q269, N307, G309, and F310. Active-site residues include H348 and E350.

Belongs to the CarA family. In terms of assembly, composed of two chains; the small (or glutamine) chain promotes the hydrolysis of glutamine to ammonia, which is used by the large (or ammonia) chain to synthesize carbamoyl phosphate. Tetramer of heterodimers (alpha,beta)4.

The catalysed reaction is hydrogencarbonate + L-glutamine + 2 ATP + H2O = carbamoyl phosphate + L-glutamate + 2 ADP + phosphate + 2 H(+). It carries out the reaction L-glutamine + H2O = L-glutamate + NH4(+). It participates in amino-acid biosynthesis; L-arginine biosynthesis; carbamoyl phosphate from bicarbonate: step 1/1. Its pathway is pyrimidine metabolism; UMP biosynthesis via de novo pathway; (S)-dihydroorotate from bicarbonate: step 1/3. In terms of biological role, small subunit of the glutamine-dependent carbamoyl phosphate synthetase (CPSase). CPSase catalyzes the formation of carbamoyl phosphate from the ammonia moiety of glutamine, carbonate, and phosphate donated by ATP, constituting the first step of 2 biosynthetic pathways, one leading to arginine and/or urea and the other to pyrimidine nucleotides. The small subunit (glutamine amidotransferase) binds and cleaves glutamine to supply the large subunit with the substrate ammonia. The chain is Carbamoyl phosphate synthase small chain from Solidesulfovibrio magneticus (strain ATCC 700980 / DSM 13731 / RS-1) (Desulfovibrio magneticus).